An 842-amino-acid polypeptide reads, in one-letter code: Oxysterol-binding protein-related protein 7 (842 aa).

The disordered stretch occupies residues 1-28 (MDFQERDPPFLPESAQSSKPSSAQQASE). The segment covering 14–27 (SAQSSKPSSAQQAS) has biased composition (low complexity). The PH domain occupies 47–142 (PERQEGHLLK…WVAQLRAHRL (96 aa)). Thr-171 carries the post-translational modification Phosphothreonine. A phosphoserine mark is found at Ser-217, Ser-226, Ser-256, and Ser-272. The interval 330-369 (DMHQGSELSRMGVSEASTGQRRLHSLSTSSDTTADSFSSL) is disordered. Positions 354–369 (SLSTSSDTTADSFSSL) are enriched in low complexity.

This sequence belongs to the OSBP family. In terms of tissue distribution, expressed in epithelium of small and large intestines (at protein level). Expressed in stomach, duodenum, jejunum, ascending colon, spleen, thymus, lymph node, trachea and leukocytes.

It is found in the cytoplasm. It localises to the cytosol. The protein localises to the endoplasmic reticulum membrane. The protein resides in the cell membrane. The polypeptide is Oxysterol-binding protein-related protein 7 (OSBPL7) (Homo sapiens (Human)).